The chain runs to 273 residues: Chondrolectin (273 aa).

The N-terminal stretch at 1–21 is a signal peptide; that stretch reads MIRIASLLLGAALLCAQGAFA. Over 22 to 216 the chain is Extracellular; that stretch reads RRVVSGQKVC…VVTEAGIIPN (195 aa). One can recognise a C-type lectin domain in the interval 35-179; it reads VKHPCYKMAY…CNMKHNYICK (145 aa). 2 disulfide bridges follow: C61-C178 and C144-C170. An N-linked (GlcNAc...) asparagine glycan is attached at N86. Residues 217–237 form a helical membrane-spanning segment; that stretch reads LIYVIIPTIPLLLLILVALGT. Residues 238–273 lie on the Cytoplasmic side of the membrane; it reads CCFQMLHKSKGRSKTSPNQSTLWISKSTRKESGMEV. The disordered stretch occupies residues 247-273; the sequence is KGRSKTSPNQSTLWISKSTRKESGMEV. Residues 251–263 show a composition bias toward polar residues; it reads KTSPNQSTLWISK.

Interacts with RABGGTB. As to expression, in adult mice preferentially expressed in skeletal muscle, testis, brain, and lung. Expressed in striated muscle (at protein level). Expressed in spinal cord. Detected in spinal cord fast motor neurons (at protein level).

It is found in the membrane. May play a role in the development of the nervous system such as in neurite outgrowth and elongation. May be involved in motor axon growth and guidance. The chain is Chondrolectin (Chodl) from Mus musculus (Mouse).